Reading from the N-terminus, the 406-residue chain is Glutamyl-tRNA reductase (406 aa).

Residues 49-52, serine 107, 112-114, and glutamine 118 each bind substrate; these read TCHR and EPQ. Cysteine 50 (nucleophile) is an active-site residue. 187-192 is a binding site for NADP(+); that stretch reads GAGETG.

Belongs to the glutamyl-tRNA reductase family. As to quaternary structure, homodimer.

It catalyses the reaction (S)-4-amino-5-oxopentanoate + tRNA(Glu) + NADP(+) = L-glutamyl-tRNA(Glu) + NADPH + H(+). The protein operates within porphyrin-containing compound metabolism; protoporphyrin-IX biosynthesis; 5-aminolevulinate from L-glutamyl-tRNA(Glu): step 1/2. Its function is as follows. Catalyzes the NADPH-dependent reduction of glutamyl-tRNA(Glu) to glutamate 1-semialdehyde (GSA). The chain is Glutamyl-tRNA reductase from Thermomicrobium roseum (strain ATCC 27502 / DSM 5159 / P-2).